Here is a 334-residue protein sequence, read N- to C-terminus: MPSKESWSGRKTNRATVHKSKQEGRQQDLLIAALGMKLGSQKSSVTIWQPLKLFAYSQLTSLVRRATLKENEQIPKYEKVHNFKVHTFRGPHWCEYCANFMWGLIAQGVKCADCGLNVHKQCSKMVPNDCKPDLKHVKKVYSCDLTTLVKAHITKRPMVVDMCIREIESRGLNSEGLYRVSGFSDLIEDVKMAFDRDGEKADISVNMYEDINIITGALKLYFRDLPIPLITYDAYPKFIESAKIVDPDEQLETLHEALRSLPPAHCETLRYLMAHLKRVTLHEKENLMSAENLGIVFGPTLMRSPELDPMAALNDIRYQRLVVELLIKNEDILF.

A compositionally biased stretch (polar residues) spans 1-10; the sequence is MPSKESWSGR. The disordered stretch occupies residues 1–22; that stretch reads MPSKESWSGRKTNRATVHKSKQ. T67 bears the Phosphothreonine mark. Residues 80 to 130 form a Phorbol-ester/DAG-type zinc finger; the sequence is VHNFKVHTFRGPHWCEYCANFMWGLIAQGVKCADCGLNVHKQCSKMVPNDC. The 192-residue stretch at 143–334 folds into the Rho-GAP domain; that stretch reads CDLTTLVKAH…LLIKNEDILF (192 aa). T215 is subject to Phosphothreonine.

As to quaternary structure, interacts with EPHA4; effector of EPHA4 in axon guidance linking EPHA4 activation to RAC1 regulation. In terms of processing, phosphorylated. Phosphorylation is EPHA4 kinase activity-dependent. In terms of tissue distribution, in neurons in brain regions that are involved in learning and memory processes.

Its function is as follows. GTPase-activating protein for p21-rac and a phorbol ester receptor. Involved in the assembly of neuronal locomotor circuits as a direct effector of EPHA4 in axon guidance. In Rattus norvegicus (Rat), this protein is N-chimaerin (Chn1).